A 169-amino-acid chain; its full sequence is Small ribosomal subunit protein uS5 (169 aa).

The S5 DRBM domain maps to L14–V77.

Belongs to the universal ribosomal protein uS5 family. As to quaternary structure, part of the 30S ribosomal subunit. Contacts proteins S4 and S8.

Functionally, with S4 and S12 plays an important role in translational accuracy. Its function is as follows. Located at the back of the 30S subunit body where it stabilizes the conformation of the head with respect to the body. In Limosilactobacillus reuteri (strain DSM 20016) (Lactobacillus reuteri), this protein is Small ribosomal subunit protein uS5.